Reading from the N-terminus, the 139-residue chain is 6,7-dimethyl-8-ribityllumazine synthase (139 aa).

Residues phenylalanine 11, 42 to 44 (ALE), and 66 to 68 (VVI) each bind 5-amino-6-(D-ribitylamino)uracil. 71–72 (ET) provides a ligand contact to (2S)-2-hydroxy-3-oxobutyl phosphate. Histidine 74 (proton donor) is an active-site residue. 5-amino-6-(D-ribitylamino)uracil is bound at residue asparagine 98. (2S)-2-hydroxy-3-oxobutyl phosphate is bound at residue arginine 112.

Belongs to the DMRL synthase family.

It carries out the reaction (2S)-2-hydroxy-3-oxobutyl phosphate + 5-amino-6-(D-ribitylamino)uracil = 6,7-dimethyl-8-(1-D-ribityl)lumazine + phosphate + 2 H2O + H(+). It participates in cofactor biosynthesis; riboflavin biosynthesis; riboflavin from 2-hydroxy-3-oxobutyl phosphate and 5-amino-6-(D-ribitylamino)uracil: step 1/2. Catalyzes the formation of 6,7-dimethyl-8-ribityllumazine by condensation of 5-amino-6-(D-ribitylamino)uracil with 3,4-dihydroxy-2-butanone 4-phosphate. This is the penultimate step in the biosynthesis of riboflavin. This Zymomonas mobilis subsp. mobilis (strain ATCC 31821 / ZM4 / CP4) protein is 6,7-dimethyl-8-ribityllumazine synthase.